The following is a 176-amino-acid chain: NAD(P)H-quinone oxidoreductase subunit 6, chloroplastic (176 aa).

Transmembrane regions (helical) follow at residues 10-30 (ILLVFLGSGLILGGLGVVLFT), 32-52 (PIYSAFSLGLVFVCISLFYIP), 61-81 (AQLLIYVGAVNVLIVFAVMFM), 90-112 (FHLWTVGDGITSLVCTSILFSLI), and 152-172 (FYLPFELTSIILLVALIGAIA).

The protein belongs to the complex I subunit 6 family. NDH is composed of at least 16 different subunits, 5 of which are encoded in the nucleus.

It is found in the plastid. Its subcellular location is the chloroplast thylakoid membrane. The catalysed reaction is a plastoquinone + NADH + (n+1) H(+)(in) = a plastoquinol + NAD(+) + n H(+)(out). It catalyses the reaction a plastoquinone + NADPH + (n+1) H(+)(in) = a plastoquinol + NADP(+) + n H(+)(out). NDH shuttles electrons from NAD(P)H:plastoquinone, via FMN and iron-sulfur (Fe-S) centers, to quinones in the photosynthetic chain and possibly in a chloroplast respiratory chain. The immediate electron acceptor for the enzyme in this species is believed to be plastoquinone. Couples the redox reaction to proton translocation, and thus conserves the redox energy in a proton gradient. This Ceratophyllum demersum (Rigid hornwort) protein is NAD(P)H-quinone oxidoreductase subunit 6, chloroplastic (ndhG).